The chain runs to 286 residues: Phosphatidylserine decarboxylase proenzyme (286 aa).

Active-site charge relay system; for autoendoproteolytic cleavage activity residues include D90, H147, and S252. The Schiff-base intermediate with substrate; via pyruvic acid; for decarboxylase activity role is filled by S252. At S252 the chain carries Pyruvic acid (Ser); by autocatalysis.

The protein belongs to the phosphatidylserine decarboxylase family. PSD-B subfamily. Prokaryotic type I sub-subfamily. In terms of assembly, heterodimer of a large membrane-associated beta subunit and a small pyruvoyl-containing alpha subunit. Pyruvate serves as cofactor. Is synthesized initially as an inactive proenzyme. Formation of the active enzyme involves a self-maturation process in which the active site pyruvoyl group is generated from an internal serine residue via an autocatalytic post-translational modification. Two non-identical subunits are generated from the proenzyme in this reaction, and the pyruvate is formed at the N-terminus of the alpha chain, which is derived from the carboxyl end of the proenzyme. The autoendoproteolytic cleavage occurs by a canonical serine protease mechanism, in which the side chain hydroxyl group of the serine supplies its oxygen atom to form the C-terminus of the beta chain, while the remainder of the serine residue undergoes an oxidative deamination to produce ammonia and the pyruvoyl prosthetic group on the alpha chain. During this reaction, the Ser that is part of the protease active site of the proenzyme becomes the pyruvoyl prosthetic group, which constitutes an essential element of the active site of the mature decarboxylase.

Its subcellular location is the cell membrane. It catalyses the reaction a 1,2-diacyl-sn-glycero-3-phospho-L-serine + H(+) = a 1,2-diacyl-sn-glycero-3-phosphoethanolamine + CO2. The protein operates within phospholipid metabolism; phosphatidylethanolamine biosynthesis; phosphatidylethanolamine from CDP-diacylglycerol: step 2/2. Functionally, catalyzes the formation of phosphatidylethanolamine (PtdEtn) from phosphatidylserine (PtdSer). This chain is Phosphatidylserine decarboxylase proenzyme, found in Pseudomonas fluorescens (strain Pf0-1).